The sequence spans 51 residues: Large ribosomal subunit protein eL39 (51 aa).

It belongs to the eukaryotic ribosomal protein eL39 family.

This chain is Large ribosomal subunit protein eL39 (RpL39), found in Plutella xylostella (Diamondback moth).